Consider the following 468-residue polypeptide: UDP-glucosyl transferase 74CD1 (468 aa).

Gly-20 lines the UDP-alpha-D-glucose pocket. His-21 functions as the Proton acceptor in the catalytic mechanism. Asp-114 acts as the Charge relay in catalysis. 10 residues coordinate UDP-alpha-D-glucose: Ser-292, Trp-344, Gln-347, His-362, Trp-365, Asn-366, Ser-367, Glu-370, Asp-386, and Gln-387.

It belongs to the UDP-glycosyltransferase family. In terms of tissue distribution, mainly expressed in flowers, flower buds and young leaves, and, to a lesser extent, in old leaves, stems and roots.

It participates in secondary metabolite biosynthesis; terpenoid biosynthesis. Functionally, component of the oleanane-type triterpene saponins (e.g. saponarioside A and saponarioside B) biosynthetic pathway, leading to the production of natural products with detergent properties used as traditional sources of soap. A glycosyltransferase that, together with SDR1, mediates the conversion of QA-tri to QA-triF; UGT74CD1 may transfer 4-keto-6-deoxy-glucose to QA-tri, which is in turn reduced to D-fucose by SDR1, thus leading to QA-triF formation via the initiation of the C-28 sugar chain. The protein is UDP-glucosyl transferase 74CD1 of Saponaria officinalis (Common soapwort).